The primary structure comprises 194 residues: Ion-translocating oxidoreductase complex subunit A (194 aa).

6 consecutive transmembrane segments (helical) span residues 4–24, 39–59, 71–91, 102–122, 135–155, and 172–192; these read LALILVSAILVNNFVLVQFLG, IGLSLATTFVLTLAAICSYIL, FLRTIGFILVIAVVVQFTEML, VLGIFLPLITTNCIVLGVALL, TTQGFGAGLGFSLVLVLFAAL, and AIGMITAGLMSLAFMGFSGLI.

The protein belongs to the NqrDE/RnfAE family. The complex is composed of six subunits: RnfA, RnfB, RnfC, RnfD, RnfE and RnfG.

It localises to the cell inner membrane. Part of a membrane-bound complex that couples electron transfer with translocation of ions across the membrane. This chain is Ion-translocating oxidoreductase complex subunit A, found in Pseudomonas paraeruginosa (strain DSM 24068 / PA7) (Pseudomonas aeruginosa (strain PA7)).